The following is a 1452-amino-acid chain: ABC-type transporter adrC (1452 aa).

The interval 1-38 (MAPEEGDQAMSHEDKAACSSLNTTSSTELFDGAPSSEN) is disordered. A compositionally biased stretch (polar residues) spans 19-28 (SSLNTTSSTE). An ABC transporter 1 domain is found at 116–378 (KRLMSIVGNK…FETMGWKRPP (263 aa)). 6 helical membrane-spanning segments follow: residues 487-507 (IPAL…IGSL), 524-544 (VLFL…TTLY), 569-589 (VIVD…IVYF), 598-618 (SHFF…ATIF), 631-651 (AMAL…FTVP), and 738-758 (GILV…TELI). Positions 813 to 1055 (FSWKGLSYDI…TVLEYLEDKG (243 aa)) constitute an ABC transporter 2 domain. Residue 849 to 856 (GVSGAGKT) participates in ATP binding. The next 7 helical transmembrane spans lie at 1149-1169 (YILA…FSFW), 1181-1201 (VLFS…QIMP), 1224-1244 (VFIL…GICT), 1264-1284 (LVLL…QLVV), 1287-1307 (VPSV…CLLF), 1322-1344 (IFMN…ALHG), and 1415-1435 (FGIF…LYYL).

It belongs to the ABC transporter superfamily. ABCG family. PDR (TC 3.A.1.205) subfamily.

It is found in the membrane. ABC-type transporter; part of the gene cluster that mediates the biosynthesis of the meroterpenoid compound andrastin A, a promising antitumoral compound. Is required for the production of andrastin A but does not have a significant role in its secretion. The sequence is that of ABC-type transporter adrC from Penicillium roqueforti.